The chain runs to 453 residues: Probable glycine dehydrogenase (decarboxylating) subunit 1 (453 aa).

It belongs to the GcvP family. N-terminal subunit subfamily. In terms of assembly, the glycine cleavage system is composed of four proteins: P, T, L and H. In this organism, the P 'protein' is a heterodimer of two subunits.

The catalysed reaction is N(6)-[(R)-lipoyl]-L-lysyl-[glycine-cleavage complex H protein] + glycine + H(+) = N(6)-[(R)-S(8)-aminomethyldihydrolipoyl]-L-lysyl-[glycine-cleavage complex H protein] + CO2. Its function is as follows. The glycine cleavage system catalyzes the degradation of glycine. The P protein binds the alpha-amino group of glycine through its pyridoxal phosphate cofactor; CO(2) is released and the remaining methylamine moiety is then transferred to the lipoamide cofactor of the H protein. The chain is Probable glycine dehydrogenase (decarboxylating) subunit 1 from Methylococcus capsulatus (strain ATCC 33009 / NCIMB 11132 / Bath).